Consider the following 241-residue polypeptide: MAGHSKWANIKHKKAAADAKRGKIWTRLIKEITVAAKLGGGDVDSNPRLRLSIDKAMDANMPKDNIQRAIQRGVGGMEGANYEEIRYEGYGLAGAAIIVDCLTDNRTRTVAEVRHAFSKHGGNMGTEGSVAFMFTHCGQFLYAPGTPEDKLMEAALEAGADDVVTNDDGSIEVTCPPNDFSAVKAALEAAGFKAEVADVVMKPQNEVSFAGDDAAKMQKLLDALENLDDVQEVFTNAVIED.

This sequence belongs to the TACO1 family.

It localises to the cytoplasm. This is Probable transcriptional regulatory protein H16_A0916 from Cupriavidus necator (strain ATCC 17699 / DSM 428 / KCTC 22496 / NCIMB 10442 / H16 / Stanier 337) (Ralstonia eutropha).